A 399-amino-acid chain; its full sequence is Serine/threonine-protein kinase PknL (399 aa).

The Cytoplasmic segment spans residues 1–368; that stretch reads MVEAGTRDPL…FIWARQHARR (368 aa). The Protein kinase domain occupies 19-278; the sequence is YLVQAKIASG…IAMGADLEAI (260 aa). ATP-binding positions include 25–33 and Lys48; that span reads IASGGTSTV. Thr32 bears the Phosphothreonine; by autocatalysis mark. Thr62 is subject to Phosphothreonine; by autocatalysis. Asp142 (proton acceptor) is an active-site residue. 3 positions are modified to phosphothreonine; by autocatalysis: Thr173, Thr175, and Thr323. The tract at residues 312 to 346 is disordered; it reads GQLGAKPVHHPTRQLTRQPGDCSEPASGSEPEHEP. A helical transmembrane segment spans residues 369-389; that stretch reads MVLVWVSVVLAITGLVASAAW. At 390-399 the chain is on the extracellular side; it reads TIGSNLSGLL.

It belongs to the protein kinase superfamily. Ser/Thr protein kinase family. In terms of processing, autophosphorylated. Thr-173 is required for autophosphorylation and transphosphorylation activities. Thr-175 is not necessary for autophosphorylation activity, but is required for full kinase activity.

The protein localises to the cell membrane. It catalyses the reaction L-seryl-[protein] + ATP = O-phospho-L-seryl-[protein] + ADP + H(+). The enzyme catalyses L-threonyl-[protein] + ATP = O-phospho-L-threonyl-[protein] + ADP + H(+). Its function is as follows. Phosphorylates the DNA-binding protein MT2231. May be involved in the regulation of cell division and cell envelope biosynthesis. In Mycobacterium tuberculosis (strain CDC 1551 / Oshkosh), this protein is Serine/threonine-protein kinase PknL (pknL).